Here is a 300-residue protein sequence, read N- to C-terminus: MKDRIVRATAANGGIRLVAVLTTESSLEAKKRHGLSYITTCILGRAFSASLLLASSMKIMHGRVTLRVRSDGPLKGLLVDAGRDGKVRGYVGNPDLELDLVKINNNKYSFDFTKALGTGYLNVIRDSGIGEPFTSTVELVNGNIAEDLASYLYHSEQTPSAVFIGEKIQNKNVICSGGLLAQVLPKKDTDPLLVSLLEERCKEINSFSEDLFHSQDNLLSLIRNIFPDIDDKSISEKARSQEVGFKCKCSKQRSLNAMKMLDKCELEDILKKDGRAELVCEFCKNKYLINYEEIRLMIES.

Disulfide bonds link Cys-247-Cys-249 and Cys-280-Cys-283.

It belongs to the HSP33 family. Post-translationally, under oxidizing conditions two disulfide bonds are formed involving the reactive cysteines. Under reducing conditions zinc is bound to the reactive cysteines and the protein is inactive.

The protein localises to the cytoplasm. Its function is as follows. Redox regulated molecular chaperone. Protects both thermally unfolding and oxidatively damaged proteins from irreversible aggregation. Plays an important role in the bacterial defense system toward oxidative stress. The chain is 33 kDa chaperonin from Prochlorococcus marinus (strain MIT 9312).